Reading from the N-terminus, the 315-residue chain is Phosphatidylglycerol--prolipoprotein diacylglyceryl transferase (315 aa).

Helical transmembrane passes span 19 to 39 and 93 to 113; these read FTIH…VWIL and VWEG…VAFL. An a 1,2-diacyl-sn-glycero-3-phospho-(1'-sn-glycerol)-binding site is contributed by Arg141. 2 helical membrane passes run 188–208 and 256–276; these read LFHP…ALII and VWTA…LYQY.

Belongs to the Lgt family.

The protein resides in the cell membrane. The catalysed reaction is L-cysteinyl-[prolipoprotein] + a 1,2-diacyl-sn-glycero-3-phospho-(1'-sn-glycerol) = an S-1,2-diacyl-sn-glyceryl-L-cysteinyl-[prolipoprotein] + sn-glycerol 1-phosphate + H(+). Its pathway is protein modification; lipoprotein biosynthesis (diacylglyceryl transfer). Functionally, catalyzes the transfer of the diacylglyceryl group from phosphatidylglycerol to the sulfhydryl group of the N-terminal cysteine of a prolipoprotein, the first step in the formation of mature lipoproteins. The chain is Phosphatidylglycerol--prolipoprotein diacylglyceryl transferase from Bifidobacterium longum (strain NCC 2705).